A 412-amino-acid chain; its full sequence is Divalent metal cation transporter MntH (412 aa).

Residues 1–19 are Cytoplasmic-facing; the sequence is MTNYRVESSSGRAARKTRL. The helical transmembrane segment at 20-39 threads the bilayer; that stretch reads ALMGPAFIAAIGYIDPGNFA. Residues 40-51 lie on the Periplasmic side of the membrane; sequence TNIQAGASFGYQ. Residues 52 to 71 form a helical membrane-spanning segment; it reads LLWVVVWANLMAMLIQILSA. Residues 72-95 lie on the Cytoplasmic side of the membrane; that stretch reads KLGIATGKNLAEQIRDHYPRPVVW. Residues 96–118 form a helical membrane-spanning segment; the sequence is FYWVQAEIIAMATDLAEFIGAAI. Over 119–125 the chain is Periplasmic; the sequence is GFKLILG. Residues 126–145 traverse the membrane as a helical segment; that stretch reads VSLLQGAVLTGIATFLILML. The Cytoplasmic portion of the chain corresponds to 146-155; the sequence is QRRGQKPLEK. Residues 156–175 form a helical membrane-spanning segment; that stretch reads VIGGLLLFVAAAYIVELIFS. Residues 176-196 lie on the Periplasmic side of the membrane; that stretch reads QPNLAQLGKGMVIPSLPTSEA. The chain crosses the membrane as a helical span at residues 197–220; the sequence is VFLAAGVLGATIMPHVIYLHSSLT. Topologically, residues 221 to 238 are cytoplasmic; it reads QHLHGGSRQQRYSATKWD. The helical transmembrane segment at 239 to 258 threads the bilayer; that stretch reads VAIAMTIAGFVNLAMMATAA. The Periplasmic segment spans residues 259–276; it reads AAFHFSGHTGVADLDEAY. A helical transmembrane segment spans residues 277–297; the sequence is LTLQPLLSHAAATVFGLSLVA. Over 298-327 the chain is Cytoplasmic; that stretch reads AGLSSTVVGTLAGQVVMQGFIRFHIPLWVR. The chain crosses the membrane as a helical span at residues 328 to 344; the sequence is RTVTMLPSFIVILMGLD. Topologically, residues 345–350 are periplasmic; it reads PTRILV. The chain crosses the membrane as a helical span at residues 351-370; sequence MSQVLLSFGIALALVPLLIF. The Cytoplasmic portion of the chain corresponds to 371 to 387; that stretch reads TSDSKLMGDLVNSKRVK. A helical membrane pass occupies residues 388-406; sequence QTGWVIVVLVVALNIWLLV. The Periplasmic portion of the chain corresponds to 407-412; sequence GTALGL.

The protein belongs to the NRAMP family.

It localises to the cell inner membrane. Functionally, h(+)-stimulated, divalent metal cation uptake system. The polypeptide is Divalent metal cation transporter MntH (Escherichia coli O9:H4 (strain HS)).